A 594-amino-acid chain; its full sequence is MEEYQKKIKEKLNVVPLEPGCYLMKDRNDQVIYVGKAKRLRNRLRSYFTGAHDAKTTRLVGEIRNFEFIVTSSETESLLLELNLIKQYQPRYNILLKDDKSYPFIKITKEKHPRLLVTRTVKKNSGKYFGPYPNAYSAQETKKLLDRIYPFRKCDNMPDKLCLYYHIGQCMGPCVYDVDLEKYAQMTKEITDFLNGEDKTILNHLEERMNKASEQLDFEQAKEYRDMIQHIHNLTKKQKIMSSDNTIRDVFGYSVSKGWMCVQVFFVRQGNMIKRDATMIPIQQTEEEEFYTFIGQFYSLNQHLIPKEVHVPKNLDKDIIQSVVDTKIVQPVRGAKKDMINLANHNAEVQLDNKFELIARDESRTIKAIEELGERMGIQTPIRIEAFDNSNIQGVDPVSAMVTFVDGKPHKKDYRKYKIKTVEGPDDYKSMREVVRRRYTRVLNEGLPLPDLIIVDGGKGHMNGVMDVLENELGLDIPVAGLQKNDKHQTSELLYGASAEIVPLKKNSQAFYLLHRIQDEVHRFAITFHRQTRQKTGLKSVLDDIDGIGTKRKTSLLRTFGSIKKMKEASFDELRQAGLPEKVAKNLQNALQNK.

A GIY-YIG domain is found at 17–94; it reads LEPGCYLMKD…IKQYQPRYNI (78 aa). The region spanning 199–234 is the UVR domain; it reads KTILNHLEERMNKASEQLDFEQAKEYRDMIQHIHNL.

The protein belongs to the UvrC family. Interacts with UvrB in an incision complex.

The protein resides in the cytoplasm. In terms of biological role, the UvrABC repair system catalyzes the recognition and processing of DNA lesions. UvrC both incises the 5' and 3' sides of the lesion. The N-terminal half is responsible for the 3' incision and the C-terminal half is responsible for the 5' incision. The chain is UvrABC system protein C from Staphylococcus epidermidis (strain ATCC 35984 / DSM 28319 / BCRC 17069 / CCUG 31568 / BM 3577 / RP62A).